The following is a 331-amino-acid chain: Probable cytosolic iron-sulfur protein assembly protein Ciao1 (331 aa).

WD repeat units follow at residues 12–51 (GHKG…WTTK), 57–96 (GHKR…ATLE), 97–136 (GHEN…EFEC), 142–181 (AHTQ…SDWD), 188–227 (SHTS…NEAG), 246–285 (QHSR…KRDE), and 297–331 (AHEQ…KLQE).

The protein belongs to the WD repeat CIA1 family.

Essential component of the cytosolic iron-sulfur (Fe/S) protein assembly machinery. Required for the maturation of extramitochondrial Fe/S proteins. This Drosophila grimshawi (Hawaiian fruit fly) protein is Probable cytosolic iron-sulfur protein assembly protein Ciao1.